Here is a 90-residue protein sequence, read N- to C-terminus: UPF0297 protein BH1268 (90 aa).

The protein belongs to the UPF0297 family.

This chain is UPF0297 protein BH1268, found in Halalkalibacterium halodurans (strain ATCC BAA-125 / DSM 18197 / FERM 7344 / JCM 9153 / C-125) (Bacillus halodurans).